Reading from the N-terminus, the 430-residue chain is Trigger factor (430 aa).

The PPIase FKBP-type domain occupies 164-249; it reads DDWAVIDHEG…LKALKTRQLP (86 aa).

It belongs to the FKBP-type PPIase family. Tig subfamily.

Its subcellular location is the cytoplasm. It carries out the reaction [protein]-peptidylproline (omega=180) = [protein]-peptidylproline (omega=0). In terms of biological role, involved in protein export. Acts as a chaperone by maintaining the newly synthesized protein in an open conformation. Functions as a peptidyl-prolyl cis-trans isomerase. The chain is Trigger factor from Anaeromyxobacter sp. (strain Fw109-5).